Here is a 774-residue protein sequence, read N- to C-terminus: Two pore channel protein 2 (774 aa).

At 1–92 the chain is on the cytoplasmic side; sequence MEEEPLLAGS…GSLRLYRWYY (92 aa). Residues 93–113 traverse the membrane as a helical segment; sequence SNLCQWGLGLTIAVVLALAFI. The Extracellular segment spans residues 114-140; sequence ERPSSLTYTSDIRVKPKPWEPPCGMTE. Residues 141 to 161 form a helical membrane-spanning segment; it reads GIEIVCLCIFILDVTAKGYLI. Over 162 to 170 the chain is Cytoplasmic; the sequence is GWEEFRMNK. The chain crosses the membrane as a helical span at residues 171-191; that stretch reads WLLAYLIVITASVIDWMLSIS. The Extracellular segment spans residues 192 to 197; the sequence is MLCDEN. The helical transmembrane segment at 198 to 218 threads the bilayer; it reads LRVRRLIRPFFLLQNSSLMKK. The tract at residues 217-221 is interaction with phosphatidylinositol 3,5-bisphosphate; the sequence is KKTLK. The Cytoplasmic portion of the chain corresponds to 219–232; it reads TLKCIKRTLPEIAS. Residues 233–253 form a helical membrane-spanning segment; sequence VILLLALHICLFTMIGMLIFA. At 254 to 267 the chain is on the extracellular side; the sequence is KSDDPKQNGEWQTY. An intramembrane region (helical; Pore-forming) is located at residues 268–292; the sequence is FRNLPKALSSLLVLLTTANNPDVMI. Residues 293–302 are Extracellular-facing; the sequence is PAYSLNRGYS. The chain crosses the membrane as a helical span at residues 303–323; that stretch reads IFFILFSVFGTYLLMNLMTAI. Residues 324–452 are Cytoplasmic-facing; that stretch reads IYNQFRGYLL…YVYSHYYISV (129 aa). A helical membrane pass occupies residues 453 to 475; the sequence is LGNAVALANVICICTVLVLNAEK. Residues 476-486 lie on the Extracellular side of the membrane; the sequence is SASEKNYFYME. The chain crosses the membrane as a helical span at residues 487–507; it reads IINCIFILYYLIEMLLKIVAF. Topologically, residues 508 to 518 are cytoplasmic; that stretch reads GWKGYLSYRNN. Residues 519–539 traverse the membrane as a helical segment; the sequence is IFDGFLTVLLLAIQIVIFITF. The Extracellular segment spans residues 540–564; sequence KIPYVDVDPVPRHVMALWEMIRLVN. The helical transmembrane segment at 565–585 threads the bilayer; sequence MLIVFRFLRIIPEIKLMAVVA. The Cytoplasmic portion of the chain corresponds to 586-596; that stretch reads STIVDLVKNLR. A helical transmembrane segment spans residues 597-617; sequence AFAGILLVVYYMFAVLGIWLF. The Extracellular segment spans residues 618-658; it reads QGAISPPSNMSLVSNSSLENITGPYSMECGTFEQLEYWPNN. N-linked (GlcNAc...) asparagine glycans are attached at residues asparagine 626, asparagine 632, and asparagine 637. Residues 659–681 constitute an intramembrane region (helical; Pore-forming); that stretch reads FDDFASSLILLYNIMVVNNWHVF. At 682-696 the chain is on the extracellular side; the sequence is TDAYARYTTDWSLVY. Residues 697–717 traverse the membrane as a helical segment; sequence FVVWWLTSSVMWVNLFVALIL. Residues 718–774 are Cytoplasmic-facing; that stretch reads ENFTYKWDRSNGLSVEDVERIAYQSTVQLMFKEHVKEPTEEELLAQLHQHPHLHLSW.

It belongs to the calcium channel alpha-1 subunit (TC 1.A.1.11) family. Two pore calcium channel subfamily. Homodimer. Post-translationally, N-glycosylated.

It is found in the late endosome membrane. The protein localises to the lysosome membrane. It catalyses the reaction Na(+)(in) = Na(+)(out). The catalysed reaction is Ca(2+)(in) = Ca(2+)(out). In terms of biological role, intracellular channel initially characterized as a non-selective Ca(2+)-permeable channel activated by NAADP (nicotinic acid adenine dinucleotide phosphate), it is also a highly-selective Na(+) channel activated directly by PI(3,5)P2 (phosphatidylinositol 3,5-bisphosphate). Localizes to the lysosomal and late endosome membranes where it regulates organellar membrane excitability, membrane trafficking, and pH homeostasis. In Danio rerio (Zebrafish), this protein is Two pore channel protein 2 (tpcn2).